Consider the following 883-residue polypeptide: Phosphoenolpyruvate carboxylase (883 aa).

Residues His138 and Lys546 contribute to the active site.

Belongs to the PEPCase type 1 family. Requires Mg(2+) as cofactor.

The catalysed reaction is oxaloacetate + phosphate = phosphoenolpyruvate + hydrogencarbonate. Forms oxaloacetate, a four-carbon dicarboxylic acid source for the tricarboxylic acid cycle. This Klebsiella pneumoniae (strain 342) protein is Phosphoenolpyruvate carboxylase.